Reading from the N-terminus, the 163-residue chain is Arginine repressor (163 aa).

This sequence belongs to the ArgR family.

It is found in the cytoplasm. The protein operates within amino-acid biosynthesis; L-arginine biosynthesis [regulation]. Its function is as follows. Regulates arginine biosynthesis genes. The sequence is that of Arginine repressor from Corynebacterium diphtheriae (strain ATCC 700971 / NCTC 13129 / Biotype gravis).